The following is a 117-amino-acid chain: Gamma-aminobutyric acid receptor-associated protein (117 aa).

The segment at 1 to 22 (MKFVYKEEHPFEKRRSEGEKIR) is interaction with beta-tubulin. Positions 36 to 68 (APKARIGDLDKKKYLVPSDLTVGQFYFLIRKRI) are interaction with GABRG2. The interval 36–117 (APKARIGDLD…AYSDESVYGL (82 aa)) is interaction with GPHN. Residues 48–50 (KYL) are interaction with LIR (LC3 nteracting Region) motif of ATG3. Residue G116 is the site of Phosphatidylethanolamine amidated glycine; alternate attachment. A lipid anchor (Phosphatidylserine amidated glycine; alternate) is attached at G116. L117 is a propeptide (removed in mature form).

The protein belongs to the ATG8 family. In terms of assembly, interacts with GPHN and NSF. Interacts with ATG3, ATG7 and ATG13. Interacts with alpha-tubulin. Interacts with beta-tubulin. Interacts with GABRG2. Interacts with RB1CC1. Interacts with ULK1. Interacts with CALR. Interacts with DDX47. Interacts with TP53INP1 and TP53INP2. Interacts with TBC1D5. Interacts with TBC1D25. Directly interacts with SQSTM1. Interacts with MAPK15. Interacts with TECPR2. Interacts with PCM1. Interacts with TRIM5 and TRIM21. Interacts with MEFV. Interacts with KIF21B. Interacts with WDFY3; this interaction is required for WDFY3 recruitment to MAP1LC3B-positive p62/SQSTM1 bodies. Interacts with FLCN; interaction regulates autophagy. Interacts with UBA5. Interacts with KBTBD6 and KBTBD7; the interaction is direct and required for the ubiquitination of TIAM1. Interacts with reticulophagy regulators RETREG1, RETREG2 and RETREG3. Interacts with IRGM. Interacts with STX17. Interacts with CT55; this interaction may be important for GABARAP protein stability. Interacts with DNM2. Interacts with NCOA4 (via C-terminus). The precursor molecule is cleaved by ATG4 (ATG4A, ATG4B, ATG4C or ATG4D) to expose the glycine at the C-terminus and form the cytosolic form, GABARAP-I. The processed form is then activated by APG7L/ATG7, transferred to ATG3 and conjugated to phosphatidylethanolamine (PE) phospholipid to form the membrane-bound form, GABARAP-II. During non-canonical autophagy, the processed form is conjugated to phosphatidylserine (PS) phospholipid. ATG4 proteins also mediate the delipidation of PE-conjugated forms. In addition, ATG4B and ATG4D mediate delipidation of ATG8 proteins conjugated to PS during non-canonical autophagy. ATG4B constitutes the major protein for proteolytic activation. ATG4D is the main enzyme for delipidation activity. As to expression, expressed in brain (at protein level). Can be found in both somatodendritic and axonal compartment of neurons.

It localises to the cytoplasmic vesicle. Its subcellular location is the autophagosome membrane. The protein localises to the endomembrane system. It is found in the cytoplasm. The protein resides in the cytoskeleton. It localises to the golgi apparatus membrane. Its function is as follows. Ubiquitin-like modifier that plays a role in intracellular transport of GABA(A) receptors and its interaction with the cytoskeleton. Involved in autophagy: while LC3s are involved in elongation of the phagophore membrane, the GABARAP/GATE-16 subfamily is essential for a later stage in autophagosome maturation. Through its interaction with the reticulophagy receptor TEX264, participates in the remodeling of subdomains of the endoplasmic reticulum into autophagosomes upon nutrient stress, which then fuse with lysosomes for endoplasmic reticulum turnover. Also required for the local activation of the CUL3(KBTBD6/7) E3 ubiquitin ligase complex, regulating ubiquitination a nd degradation of TIAM1, a guanyl-nucleotide exchange factor (GEF) that activates RAC1 and downstream signal transduction. Thereby, regulates different biological processes including the organization of the cytoskeleton, cell migration and proliferation. Involved in apoptosis. The protein is Gamma-aminobutyric acid receptor-associated protein of Rattus norvegicus (Rat).